A 240-amino-acid polypeptide reads, in one-letter code: Putative F-box/kelch-repeat protein At2g29860 (240 aa).

The interval 1–20 (MVLLSEIPGGSNGDDPNMNP) is disordered. Residues 17–63 (NMNPQELPEELIESIVAPIPRCYYPSLSLLSRAFRHVITSQQLFVTR) form the F-box domain. Kelch repeat units lie at residues 120–165 (KIYV…VIDG) and 167–212 (IYVI…VTYA).

The sequence is that of Putative F-box/kelch-repeat protein At2g29860 from Arabidopsis thaliana (Mouse-ear cress).